A 302-amino-acid polypeptide reads, in one-letter code: N-acetylmuramic acid 6-phosphate etherase (302 aa).

Residues 58–221 (IGKAFLNGGR…STGAMVKTGK (164 aa)) enclose the SIS domain. The Proton donor role is filled by Glu-86. Residue Glu-117 is part of the active site.

Belongs to the GCKR-like family. MurNAc-6-P etherase subfamily. In terms of assembly, homodimer.

It carries out the reaction N-acetyl-D-muramate 6-phosphate + H2O = N-acetyl-D-glucosamine 6-phosphate + (R)-lactate. The protein operates within amino-sugar metabolism; N-acetylmuramate degradation. Functionally, specifically catalyzes the cleavage of the D-lactyl ether substituent of MurNAc 6-phosphate, producing GlcNAc 6-phosphate and D-lactate. The polypeptide is N-acetylmuramic acid 6-phosphate etherase (Clostridium botulinum (strain Loch Maree / Type A3)).